Here is an 862-residue protein sequence, read N- to C-terminus: uncharacterized protein (862 aa).

An N-terminal signal peptide occupies residues 1–25; the sequence is MKPRPYSVFLFLHIVFYSLLSAVNG. Topologically, residues 26–61 are lumenal; it reads SPSLDYFETCSNFVPRAGIPTFSPYAVIKNFDEVNR. Residues 62–82 traverse the membrane as a helical segment; the sequence is MYYIQVVGNLSGVITIVGGNG. Residues 83 to 187 lie on the Cytoplasmic side of the membrane; sequence SHIHAASVYS…STTLYYFYPV (105 aa). The helical transmembrane segment at 188–208 threads the bilayer; it reads ISYLVVVSLAYVSFSIIYALF. Residues 209–230 lie on the Lumenal side of the membrane; sequence LNPWTGSLDPFKSIFNFNMDPD. A helical membrane pass occupies residues 231-250; sequence ALRLTSLGFFDFVQYLQFAV. At 251-256 the chain is on the cytoplasmic side; it reads STAQVS. Residues 257–277 form a helical membrane-spanning segment; the sequence is VMFPKFYINIMAALSWGTALF. Residues 278-329 are Lumenal-facing; that stretch reads RFPIFSEPAEYQFADFADLSVASSSYADYLPKSYGMYSFLDSIGIGTACWLP. The chain crosses the membrane as a helical span at residues 330–350; the sequence is FLIVMVIYLFAALFVALLVIF. Over 351–372 the chain is Cytoplasmic; the sequence is LKWLMSRIFNETIAETRWDTWS. Residues 373–393 form a helical membrane-spanning segment; that stretch reads FIAGSLIRLYFLTYFPTVAYM. At 394–404 the chain is on the lumenal side; that stretch reads SFQFVAPPTGY. Residues 405–425 traverse the membrane as a helical segment; sequence EIIPVLWFIFFGIFIPVYLYM. At 426 to 457 the chain is on the cytoplasmic side; it reads NLAFVEPSSKLLEDQTYLHLFGSIYNSFREER. Residues 458–480 form a helical membrane-spanning segment; the sequence is VMFWIFPIAVQFMRGITVGVIGS. Residues 481–483 lie on the Lumenal side of the membrane; sequence SGS. Residues 484–503 traverse the membrane as a helical segment; sequence AQLAIFFILEVANVVAYAYV. At 504 to 514 the chain is on the cytoplasmic side; that stretch reads RPHFPQTSMNT. Residues 515-535 form a helical membrane-spanning segment; sequence LNTFISTMRLITVILMIPLDP. Topologically, residues 536–545 are lumenal; that stretch reads RLKVLGISRD. Residues 546-566 traverse the membrane as a helical segment; that stretch reads LLAYAILFIHIMVCILFLLLS. At 567-862 the chain is on the cytoplasmic side; that stretch reads TQRFMEVSAR…AESAWSIPHP (296 aa). The span at 668–686 shows a compositional bias: polar residues; sequence QASSLVPSKNNTASSSSLM. Disordered regions lie at residues 668–717 and 815–862; these read QASS…SVRK and VLRS…IPHP. The segment covering 689–700 has biased composition (low complexity); that stretch reads SPVTPSSPYSTS. The segment covering 834–850 has biased composition (basic and acidic residues); it reads EPSRDEQYSMERKKTDD.

Belongs to the transient receptor potential (TRP) ion channel family.

It is found in the cytoplasm. The protein localises to the golgi apparatus membrane. This is an uncharacterized protein from Schizosaccharomyces pombe (strain 972 / ATCC 24843) (Fission yeast).